The sequence spans 229 residues: Ribonuclease T (229 aa).

An Exonuclease domain is found at 23–197 (VIIDVETAGF…YDTERTAKLF (175 aa)). Asp26, Glu28, His184, and Asp189 together coordinate Mg(2+). His184 serves as the catalytic Proton donor/acceptor.

It belongs to the RNase T family. In terms of assembly, homodimer. Mg(2+) is required as a cofactor.

Functionally, trims short 3' overhangs of a variety of RNA species, leaving a one or two nucleotide 3' overhang. Responsible for the end-turnover of tRNA: specifically removes the terminal AMP residue from uncharged tRNA (tRNA-C-C-A). Also appears to be involved in tRNA biosynthesis. The protein is Ribonuclease T of Haemophilus influenzae (strain 86-028NP).